Reading from the N-terminus, the 282-residue chain is Putative sugar uptake protein lp_2594 (282 aa).

The next 10 helical transmembrane spans lie at 2 to 21 (IFLI…LLVG), 31 to 48 (MFGM…FWLF), 53 to 75 (VTIS…IGQL), 90 to 112 (MPIS…FGEW), 119 to 136 (ILGL…ALSA), 146 to 163 (FSCY…WIYS), 176 to 194 (LFLP…WAIY), 209 to 226 (TLPG…ILSA), 233 to 252 (NAYI…GLFF), and 262 to 281 (IVSV…TTAL).

This sequence belongs to the GRP transporter (TC 2.A.7.5) family.

It is found in the cell membrane. This is Putative sugar uptake protein lp_2594 from Lactiplantibacillus plantarum (strain ATCC BAA-793 / NCIMB 8826 / WCFS1) (Lactobacillus plantarum).